Here is a 106-residue protein sequence, read N- to C-terminus: Large ribosomal subunit protein eL42 (106 aa).

Positions 26–53 are disordered; that stretch reads YKKGKDSLYAQGKRRYDRKQSGYGGQTK.

It belongs to the eukaryotic ribosomal protein eL42 family. As to quaternary structure, component of the large ribosomal subunit.

It localises to the cytoplasm. In terms of biological role, component of the large ribosomal subunit. The ribosome is a large ribonucleoprotein complex responsible for the synthesis of proteins in the cell. The chain is Large ribosomal subunit protein eL42 (rpl36a) from Danio rerio (Zebrafish).